The primary structure comprises 161 residues: Phosphopantetheine adenylyltransferase (161 aa).

T9 contacts substrate. ATP contacts are provided by residues 9–10 and H17; that span reads TF. 3 residues coordinate substrate: K41, L73, and R87. ATP contacts are provided by residues 88-90, E98, and 123-129; these read GLR and LSYISST.

This sequence belongs to the bacterial CoaD family. As to quaternary structure, homohexamer. Requires Mg(2+) as cofactor.

The protein localises to the cytoplasm. The catalysed reaction is (R)-4'-phosphopantetheine + ATP + H(+) = 3'-dephospho-CoA + diphosphate. It functions in the pathway cofactor biosynthesis; coenzyme A biosynthesis; CoA from (R)-pantothenate: step 4/5. Its function is as follows. Reversibly transfers an adenylyl group from ATP to 4'-phosphopantetheine, yielding dephospho-CoA (dPCoA) and pyrophosphate. This Hahella chejuensis (strain KCTC 2396) protein is Phosphopantetheine adenylyltransferase.